Consider the following 304-residue polypeptide: Non-specific ribonucleoside hydrolase RihC (304 aa).

The active site involves histidine 233.

The protein belongs to the IUNH family. RihC subfamily.

In terms of biological role, hydrolyzes both purine and pyrimidine ribonucleosides with a broad-substrate specificity. This chain is Non-specific ribonucleoside hydrolase RihC, found in Klebsiella pneumoniae (strain 342).